Reading from the N-terminus, the 366-residue chain is MSHNTFGHLFRVTTFGESHGVALGCVVDGCPPGLALEAEEIQAELDRRKPGQSRFTTQRREPDQVKILSGVFGDDRTGGRQLTTGTPIALMIENTDQRSKDYSEIRDSYRPGHADYTYDAKYGFRDYRGGGRSSARETAARVAAGAIARKVIPGITIRAALVQMGPHAIDRANWDWAEVGNNPFFCPDAKAAALYESYLDGIRKDGSSVGAVIEVIAEGVPPGLGAPIYGKLDADLAAAMMSINAVKGVEIGDGFAAAALRGEDNADEMRAGNDGRPRFLGNHAGGILGGISSGEPIVVRFAVKPTSSILTPRQSVNRQGEEIDLVTKGRHDPCVGIRAVPVAEAMMACVLADHHLRHRGQVGDRV.

The NADP(+) site is built by arginine 48 and arginine 54. Residues 132–134, 244–245, glycine 289, 304–308, and arginine 330 contribute to the FMN site; these read RSS, NA, and KPTSS.

It belongs to the chorismate synthase family. Homotetramer. FMNH2 is required as a cofactor.

The catalysed reaction is 5-O-(1-carboxyvinyl)-3-phosphoshikimate = chorismate + phosphate. The protein operates within metabolic intermediate biosynthesis; chorismate biosynthesis; chorismate from D-erythrose 4-phosphate and phosphoenolpyruvate: step 7/7. Functionally, catalyzes the anti-1,4-elimination of the C-3 phosphate and the C-6 proR hydrogen from 5-enolpyruvylshikimate-3-phosphate (EPSP) to yield chorismate, which is the branch point compound that serves as the starting substrate for the three terminal pathways of aromatic amino acid biosynthesis. This reaction introduces a second double bond into the aromatic ring system. This is Chorismate synthase from Methylorubrum populi (strain ATCC BAA-705 / NCIMB 13946 / BJ001) (Methylobacterium populi).